Consider the following 480-residue polypeptide: Cytochrome P450 724B1 (480 aa).

A helical membrane pass occupies residues leucine 6 to phenylalanine 26. Residue cysteine 426 coordinates heme.

Belongs to the cytochrome P450 family. Requires heme as cofactor. In terms of tissue distribution, ubiquitously expressed at low levels, but preferentially in the internodes and the florets before flowering.

The protein localises to the membrane. The enzyme catalyses campesterol + reduced [NADPH--hemoprotein reductase] + O2 = (22S)-22-hydroxycampesterol + oxidized [NADPH--hemoprotein reductase] + H2O + H(+). The protein operates within plant hormone biosynthesis; brassinosteroid biosynthesis. Its function is as follows. Involved in brassinosteroid biosynthesis. May catalyze a C6-oxidation step and may be involved to supply 6-deoxotyphasterol and typhasterol. Involved in internode elongation and seed development. Catalyzes the conversion of campesterol (CR) to (22S)-22-hydroxycampesterol (22-OHCR, 22-hydroxyCR). The protein is Cytochrome P450 724B1 of Oryza sativa subsp. japonica (Rice).